The chain runs to 239 residues: Mitochondrial fission factor homolog B (239 aa).

The Cytoplasmic portion of the chain corresponds to 1–219; the sequence is MAEINRMQYE…ENKERVKHEM (219 aa). Residues 107–139 form a disordered region; it reads EGPAPATPHSKEVRSSGHLKRDGLASENSLRQN. The span at 115 to 130 shows a compositional bias: basic and acidic residues; sequence HSKEVRSSGHLKRDGL. Residues 184 to 214 adopt a coiled-coil conformation; it reads DLALADAASLRRQIIKLNRRLLLLEEENKER. A helical; Anchor for type IV membrane protein transmembrane segment spans residues 220 to 237; sequence TMYSIIIIFGLLNSWLWF. Over 238-239 the chain is Extracellular; that stretch reads RR.

This sequence belongs to the Tango11 family.

The protein resides in the mitochondrion outer membrane. It localises to the peroxisome. Plays a role in mitochondrial and peroxisomal fission. Promotes the recruitment and association of the fission mediator dynamin-related protein 1 (DNM1L) to the mitochondrial surface. This Xenopus laevis (African clawed frog) protein is Mitochondrial fission factor homolog B (mff-b).